Here is a 135-residue protein sequence, read N- to C-terminus: Large ribosomal subunit protein uL16c (135 aa).

Belongs to the universal ribosomal protein uL16 family. In terms of assembly, part of the 50S ribosomal subunit.

It is found in the plastid. Its subcellular location is the chloroplast. The protein is Large ribosomal subunit protein uL16c of Coffea arabica (Arabian coffee).